Here is a 686-residue protein sequence, read N- to C-terminus: ATP-dependent zinc metalloprotease FtsH 2 (686 aa).

Topologically, residues 1 to 11 (MKKNIKDIFKN) are cytoplasmic. The helical transmembrane segment at 12 to 32 (FNIFWFCFIFLLLSLLYCLIM) threads the bilayer. Residues 33 to 178 (MEISHQHDNN…LQRIPYQPYF (146 aa)) lie on the Extracellular side of the membrane. The chain crosses the membrane as a helical span at residues 179-199 (GFAPFISAVNICILIIIFYFI). The Cytoplasmic segment spans residues 200–686 (YNSIEKTSAQ…QKSEKEDCNK (487 aa)). 272–279 (GPPGVGKT) lines the ATP pocket. H493 is a binding site for Zn(2+). Residue E494 is part of the active site. Residues H497 and D569 each contribute to the Zn(2+) site.

It in the central section; belongs to the AAA ATPase family. The protein in the C-terminal section; belongs to the peptidase M41 family. In terms of assembly, homohexamer. Zn(2+) serves as cofactor.

The protein resides in the cell membrane. Acts as a processive, ATP-dependent zinc metallopeptidase for both cytoplasmic and membrane proteins. Plays a role in the quality control of integral membrane proteins. The polypeptide is ATP-dependent zinc metalloprotease FtsH 2 (Phytoplasma mali (strain AT)).